The sequence spans 289 residues: 4-hydroxy-tetrahydrodipicolinate synthase (289 aa).

Position 43 (threonine 43) interacts with pyruvate. Tyrosine 131 acts as the Proton donor/acceptor in catalysis. Residue lysine 160 is the Schiff-base intermediate with substrate of the active site. Pyruvate is bound at residue isoleucine 200.

Belongs to the DapA family. In terms of assembly, homotetramer; dimer of dimers.

It localises to the cytoplasm. The catalysed reaction is L-aspartate 4-semialdehyde + pyruvate = (2S,4S)-4-hydroxy-2,3,4,5-tetrahydrodipicolinate + H2O + H(+). It participates in amino-acid biosynthesis; L-lysine biosynthesis via DAP pathway; (S)-tetrahydrodipicolinate from L-aspartate: step 3/4. Functionally, catalyzes the condensation of (S)-aspartate-beta-semialdehyde [(S)-ASA] and pyruvate to 4-hydroxy-tetrahydrodipicolinate (HTPA). In Methanococcus vannielii (strain ATCC 35089 / DSM 1224 / JCM 13029 / OCM 148 / SB), this protein is 4-hydroxy-tetrahydrodipicolinate synthase.